A 614-amino-acid chain; its full sequence is Vitamin B12 transporter BtuB (614 aa).

The N-terminal stretch at 1–20 (MIKKASLLTACSVTAFSAWA) is a signal peptide. A TonB box motif is present at residues 26-33 (DTLVVTAN). A TBDR plug domain is found at 38-152 (PRSTVLAPTT…IGGVVNIITT (115 aa)). Residues L83, S85, N92, and 110–111 (VS) contribute to the cyanocob(III)alamin site. Residues 155 to 614 (HPGTEISAGW…EYTLSGSYTF (460 aa)) form the TBDR beta-barrel domain. The next 3 membrane-spanning stretches (beta stranded) occupy residues 158 to 165 (TEISAGWG), 169 to 178 (YQNYDVSTQQ), and 184 to 195 (TRVTLLGDYAHT). Ca(2+)-binding residues include D199, Q211, D213, and D215. 2 beta stranded membrane passes run 217–227 (FLSKTLYGALE) and 232–248 (DVWS…NRTN). Residues Y249 and D250 each contribute to the Ca(2+) site. A cyanocob(III)alamin-binding site is contributed by A251. Ca(2+) is bound at residue D261. The next 14 beta stranded transmembrane spans lie at 263-277 (RKLY…LRYN), 279-296 (ELIK…KDYN), 309-325 (TLDE…NNII), 328-337 (HGNIGAGVDW), 353-369 (YDQR…QQVG), 371-381 (FTFEGAGRSDD), 385-400 (FGRH…WEFI), 403-417 (YRFI…KAPN), 434-443 (KSKQWEGAFE), 449-458 (VNWRISGYRN), 473-490 (YYNE…TANF), 494-509 (PLTH…ARNA), 517-529 (RRAK…QLDW), and 535-550 (DWGI…YDKD). T309 serves as a coordination point for cyanocob(III)alamin. Residue R517 coordinates cyanocob(III)alamin. Cyanocob(III)alamin is bound at residue Y551. The next 3 membrane-spanning stretches (beta stranded) occupy residues 558–572 (TVKM…LAVA), 585–596 (IANLFDKDYETV), and 602–614 (AGRE…SYTF). Positions 597 to 614 (YGYQTAGREYTLSGSYTF) match the TonB C-terminal box motif.

This sequence belongs to the TonB-dependent receptor family. BtuB (TC 1.B.14.3.1) subfamily.

Its subcellular location is the cell outer membrane. Involved in the active translocation of vitamin B12 (cyanocobalamin) across the outer membrane to the periplasmic space. It derives its energy for transport by interacting with the trans-periplasmic membrane protein TonB. The sequence is that of Vitamin B12 transporter BtuB from Escherichia coli O1:K1 / APEC.